The primary structure comprises 61 residues: Small ribosomal subunit protein uS14 (61 aa).

The Zn(2+) site is built by cysteine 24, cysteine 27, cysteine 40, and cysteine 43.

The protein belongs to the universal ribosomal protein uS14 family. Zinc-binding uS14 subfamily. In terms of assembly, part of the 30S ribosomal subunit. Contacts proteins S3 and S10. Requires Zn(2+) as cofactor.

Its function is as follows. Binds 16S rRNA, required for the assembly of 30S particles and may also be responsible for determining the conformation of the 16S rRNA at the A site. The sequence is that of Small ribosomal subunit protein uS14 from Borrelia garinii subsp. bavariensis (strain ATCC BAA-2496 / DSM 23469 / PBi) (Borreliella bavariensis).